Consider the following 248-residue polypeptide: MAGHSQFKNIMHRKGKQDAMRSKVFGKLAREITVAAKLGTPDPAMNPRLRAAVLAARAENMPKDNIERAIKKAAGGDSENYDEIRYEGYGPGGVAVIVEALTDNRNRAASDIRSYFTKSGGNLGETGSVSFMFDRVGVIEYDADKASADDMLEAAIEAGADDVASSEEGHEIYTSQASLSEAAKALEAKFGEPRKAALIWKPQNNIAVSDEVGEKLFKLLDQLNEHDDVQNVYANFEVSDTLAAKMAG.

The protein belongs to the TACO1 family.

It is found in the cytoplasm. The protein is Probable transcriptional regulatory protein OCAR_7305/OCA5_c08120 of Afipia carboxidovorans (strain ATCC 49405 / DSM 1227 / KCTC 32145 / OM5) (Oligotropha carboxidovorans).